Consider the following 396-residue polypeptide: Serine/threonine-protein kinase GRIK1 (396 aa).

The interval 22–65 (ERSRHSPNPYDDDTYSHDSGETSNPGGDDEEGEEEEEVEELSRS) is disordered. Over residues 48–60 (GDDEEGEEEEEVE) the composition is skewed to acidic residues. The Protein kinase domain occupies 108-369 (FVRERKIGSG…LKAVAEHPWI (262 aa)). Residues 114 to 122 (IGSGSYGKV) and K137 each bind ATP. The residue at position 154 (T154) is a Phosphothreonine; by autocatalysis. The active-site Proton acceptor is D239. Residue S261 is modified to Phosphoserine; by KIN10.

This sequence belongs to the protein kinase superfamily. Ser/Thr protein kinase family. In terms of assembly, associates with the SNF1-related protein kinase (SnRK) complex. Interacts with AL1, a geminivirus (TGMV) protein essential for viral replication. Expressed in shoot apical meristem, leaf primordium and emerging petiole (at protein level).

It localises to the cytoplasm. Its subcellular location is the nucleus. It catalyses the reaction L-seryl-[protein] + ATP = O-phospho-L-seryl-[protein] + ADP + H(+). It carries out the reaction L-threonyl-[protein] + ATP = O-phospho-L-threonyl-[protein] + ADP + H(+). Activated when autophosphorylated at Thr-154 and inactivated when phosphorylated at Ser-261 by SnRK1.1/KIN10. Its function is as follows. Activates SnRK1.1/KIN10 and SnRK1.2/KIN11 by phosphorylation of their activation-loop 'Thr-198' and 'Thr-176', respectively. Required for the regulation by SnRK1 kinases of the transcription of a large set of genes, the modification the activity of metabolic enzymes, and the control of various nutrient-responsive cellular developmental processes. This Arabidopsis thaliana (Mouse-ear cress) protein is Serine/threonine-protein kinase GRIK1 (GRIK1).